A 944-amino-acid polypeptide reads, in one-letter code: MSKVDFLHIKGARENNLKNVELTIPKNKLVIFTGLSGSGKSSLAFNTIYEEGRRRYVDSLSSYARQFLGGTSKPDVDSIEGLSPAISIEQKTTHNNPRSTVGTVTEIYDYLRLLYARIGKPFCPKHKIKIEGKTTKLIIEGIVDFPKNSKLIILSPVVELEKGTHQKLIAKLKTEGFLRLKINNEIVSLSDDKEINLDKNKRHSIDIVVDRIVLNEEKKLEISEAISIALEYGKGIVKVENVETGEIKIFSSNHSCPKGDFEMPKIETRLFSFNSPYGMCQNCKGLGVQLRGDYNLLVPDQNLSISEGAIKIFESTVNSSNQEWQEFEALLNYYGIDKNIPMRKLSESDRQIIKYGSKEEIDYIIKSQSNKFKRTKRIEGIIDKVERKYLETSSEGIRTWIKRYMSEFICNMCKGSRLNEHALAVKINGLNIWEISSLSINDVYEQSINLNLSDYEREITTLLISELTSRLSFLVDVGLDYLTLNRMAESLSGGEAQRIRLATQIGSNLTGVLYVLDEPSIGLHQKDNERLIKTLRKMVEIGNTLIVVEHDEDTMRASDFIVDIGPKAGSHGGEIVALGSVEDIIKNPISITGKYLSGEWQNATPKSRRSGSGNVIKITGASQNNIKKLDFKIPLGKFIGVTGVSGSGKSTLINQVLVNAIEKGIARDFSHDKNKNYEKIEGLLYIDKLIKISQSPIGRTPRSNPATYSSLFDDIREIFSNVPEAKARGYQKGRFSFNVPGGRCEKCSGDGSIKIEMFFLPNVYITCDHCDGKRYNEETLQIKYRSKSISDVLDMTVSDALAFFENRLIVKNKLQTLEDVGLGYIKLGQSSTTLSGGEAQRVKLASHLLKKSTGKTLYVLDEPTTGLHSHDVSLLLKVLNRLVDKGDTVIVIEHNLDVIKNCDYLIDLGPGGGVNGGKIIATGTPEQVAQIEKSYTGEFLKRVL.

Positions 1–242 (MSKVDFLHIK…GKGIVKVENV (242 aa)) constitute an ABC transporter 1 domain. ATP is bound at residue 34–41 (GLSGSGKS). The C4-type; degenerate zinc finger occupies 256 to 283 (CPKGDFEMPKIETRLFSFNSPYGMCQNC). ABC transporter domains follow at residues 359–597 (EEID…KYLS) and 610–935 (SGSG…EKSY). 643–650 (GVSGSGKS) lines the ATP pocket. Residues 744–770 (CEKCSGDGSIKIEMFFLPNVYITCDHC) form a C4-type zinc finger.

Belongs to the ABC transporter superfamily. UvrA family. As to quaternary structure, forms a heterotetramer with UvrB during the search for lesions.

It is found in the cytoplasm. In terms of biological role, the UvrABC repair system catalyzes the recognition and processing of DNA lesions. UvrA is an ATPase and a DNA-binding protein. A damage recognition complex composed of 2 UvrA and 2 UvrB subunits scans DNA for abnormalities. When the presence of a lesion has been verified by UvrB, the UvrA molecules dissociate. This is UvrABC system protein A from Mycoplasmopsis pulmonis (strain UAB CTIP) (Mycoplasma pulmonis).